Consider the following 206-residue polypeptide: Large ribosomal subunit protein eL8 (206 aa).

It belongs to the eukaryotic ribosomal protein eL8 family. Component of the large ribosomal subunit.

The protein localises to the cytoplasm. The polypeptide is Large ribosomal subunit protein eL8 (RPL7A) (Encephalitozoon cuniculi (strain GB-M1) (Microsporidian parasite)).